Consider the following 215-residue polypeptide: Histone H1.1 (215 aa).

The disordered stretch occupies residues 1–43 (MSETVPPAPAASAAPEKPLAGKKAKKPAKAAAASKKKPAGPSV). Ser-2 carries the N-acetylserine modification. Ser-2 and Ser-12 each carry phosphoserine. N6-acetyllysine is present on Lys-17. The span at 20–38 (AGKKAKKPAKAAAASKKKP) shows a compositional bias: basic residues. N6-(beta-hydroxybutyryl)lysine is present on Lys-37. One can recognise an H15 domain in the interval 39-112 (AGPSVSELIV…GASGSFKLNK (74 aa)). Ser-44 carries the post-translational modification Phosphoserine. Lys-55 carries the post-translational modification N6-(beta-hydroxybutyryl)lysine. Position 57 is a citrulline (Arg-57). Lys-67 is modified (N6-(beta-hydroxybutyryl)lysine). N6-acetyllysine is present on Lys-78. Position 88 is an N6-(beta-hydroxybutyryl)lysine (Lys-88). Residue Lys-93 is modified to N6-(beta-hydroxybutyryl)lysine; alternate. Position 93 is an N6-acetyllysine; alternate (Lys-93). The interval 94–215 (GTLVQTKGTG…KPKKAAPKKK (122 aa)) is disordered. Residue Ser-107 is modified to Phosphoserine. Position 109 is an N6-(beta-hydroxybutyryl)lysine (Lys-109). Residues 122 to 147 (GASKVATKTKATGASKKLKKATGASK) show a composition bias toward low complexity. N6-acetyllysine is present on Lys-125. Basic residues-rich tracts occupy residues 148–181 (KSVK…KKVA) and 188–215 (KAVK…PKKK). Thr-204 carries the phosphothreonine modification.

Belongs to the histone H1/H5 family. As to quaternary structure, interacts with DFFB. H1 histones are progressively phosphorylated during the cell cycle, becoming maximally phosphorylated during late G2 phase and M phase, and being dephosphorylated sharply thereafter. In terms of processing, citrullination at Arg-57 (H1R54ci) by PADI4 takes place within the DNA-binding site of H1 and results in its displacement from chromatin and global chromatin decondensation, thereby promoting pluripotency and stem cell maintenance.

It localises to the nucleus. It is found in the chromosome. Functionally, histone H1 protein binds to linker DNA between nucleosomes forming the macromolecular structure known as the chromatin fiber. Histones H1 are necessary for the condensation of nucleosome chains into higher-order structured fibers. Also acts as a regulator of individual gene transcription through chromatin remodeling, nucleosome spacing and DNA methylation. The polypeptide is Histone H1.1 (Homo sapiens (Human)).